The chain runs to 296 residues: Polyadenylate-binding protein 2-A (296 aa).

The segment at 1–106 is disordered; the sequence is MAAVSSVASL…GELTGDQTIE (106 aa). Positions 71–82 are enriched in gly residues; it reads GRGGSGGGGAGG. A compositionally biased stretch (acidic residues) spans 84 to 97; sequence EELEDEELEEEEPG. Residues 107-141 adopt a coiled-coil conformation; it reads DPELEAIKARVREMEEEAEKLKELQNEVEKQMNMS. The tract at residues 146–296 is necessary for homooligomerization; it reads NAGPVIMSVE…ARATSWYTPY (151 aa). An RRM domain is found at 163 to 240; that stretch reads RSIYVGNVDY…RQIKVVPKRT (78 aa).

In terms of assembly, monomer and homooligomer. Binds RNA as a monomer and oligomerizes when bound to poly(A). Shows dynamic spatial expression throughout development. First expressed in the animal pole region of the egg and this pattern persists through to the blastula stage. In gastrula and neurula embryos, expressed mainly in ectodermal, neural and epidermal regions. Neural tissue-specific expression pattern persists into tailbud stage when expression is localized to the brain and spinal cord. At early tadpole stage, expression becomes gradually confined to the specific vesicle regions of the developing brain. At stage 39, expressed in the telencephalon and mesencephalon regions of the brain. Also detected in the eye and olfactory pit at the tadpole stage. Expressed during gut endoderm development. At stage 35, expressed exclusively in the anterior portion of the gut endoderm, which includes the prospective liver, stomach and pancreas. As development proceeds, expression becomes restricted to the pancreas, and by stage 46/47 (the seventh day of development) expression is localized exclusively to the pancreas. Expressed in most adult tissues.

The protein localises to the nucleus. It localises to the cytoplasm. Functionally, involved in the 3'-end formation of mRNA precursors (pre-mRNA) by the addition of a poly(A) tail of 200-250 nt to the upstream cleavage product. Stimulates poly(A) polymerase (PAPOLA) conferring processivity on the poly(A) tail elongation reaction and also controls the poly(A) tail length. Increases the affinity of poly(A) polymerase for RNA. Binds to poly(A) and to poly(G) with high affinity. May protect the poly(A) tail from degradation. This Xenopus laevis (African clawed frog) protein is Polyadenylate-binding protein 2-A (pabpn1-a).